The sequence spans 158 residues: Large ribosomal subunit protein uL15 (158 aa).

Residues 1-13 show a composition bias toward basic and acidic residues; sequence MKLNEIKDNEGST. Positions 1–45 are disordered; that stretch reads MKLNEIKDNEGSTHSRKRLGRGIGSGSGKTGGRGVKGQKSRSGVA. Over residues 21 to 35 the composition is skewed to gly residues; that stretch reads RGIGSGSGKTGGRGV.

It belongs to the universal ribosomal protein uL15 family. In terms of assembly, part of the 50S ribosomal subunit.

Functionally, binds to the 23S rRNA. The chain is Large ribosomal subunit protein uL15 from Rhizobium etli (strain CIAT 652).